The primary structure comprises 456 residues: tRNA modification GTPase MnmE (456 aa).

(6S)-5-formyl-5,6,7,8-tetrahydrofolate-binding residues include R24, E81, and K120. The TrmE-type G domain maps to 216–379; sequence GMTVVIAGRP…LRDHLKACMG (164 aa). Residue N226 coordinates K(+). Residues 226-231, 245-251, 270-273, and 335-338 each bind GTP; these read NAGKSS, TDIAGTT, DTAG, and NKAD. A Mg(2+)-binding site is contributed by S230. K(+)-binding residues include T245, I247, and T250. T251 is a Mg(2+) binding site. Position 456 (K456) interacts with (6S)-5-formyl-5,6,7,8-tetrahydrofolate.

It belongs to the TRAFAC class TrmE-Era-EngA-EngB-Septin-like GTPase superfamily. TrmE GTPase family. As to quaternary structure, homodimer. Heterotetramer of two MnmE and two MnmG subunits. K(+) is required as a cofactor.

Its subcellular location is the cytoplasm. Functionally, exhibits a very high intrinsic GTPase hydrolysis rate. Involved in the addition of a carboxymethylaminomethyl (cmnm) group at the wobble position (U34) of certain tRNAs, forming tRNA-cmnm(5)s(2)U34. The protein is tRNA modification GTPase MnmE of Pseudomonas fluorescens (strain ATCC BAA-477 / NRRL B-23932 / Pf-5).